We begin with the raw amino-acid sequence, 475 residues long: ATP synthase subunit beta (475 aa).

156–163 (GGAGVGKT) serves as a coordination point for ATP.

This sequence belongs to the ATPase alpha/beta chains family. In terms of assembly, F-type ATPases have 2 components, CF(1) - the catalytic core - and CF(0) - the membrane proton channel. CF(1) has five subunits: alpha(3), beta(3), gamma(1), delta(1), epsilon(1). CF(0) has three main subunits: a(1), b(2) and c(9-12). The alpha and beta chains form an alternating ring which encloses part of the gamma chain. CF(1) is attached to CF(0) by a central stalk formed by the gamma and epsilon chains, while a peripheral stalk is formed by the delta and b chains.

The protein localises to the cell membrane. The enzyme catalyses ATP + H2O + 4 H(+)(in) = ADP + phosphate + 5 H(+)(out). Its function is as follows. Produces ATP from ADP in the presence of a proton gradient across the membrane. The catalytic sites are hosted primarily by the beta subunits. This Mycoplasma pneumoniae (strain ATCC 29342 / M129 / Subtype 1) (Mycoplasmoides pneumoniae) protein is ATP synthase subunit beta.